The following is a 121-amino-acid chain: U15-barytoxin-Tl1b (121 aa).

Positions 1-16 (MKLFMVLVASFAFAVA) are cleaved as a signal peptide. Disulfide bonds link Cys-54-Cys-72, Cys-65-Cys-78, Cys-69-Cys-119, and Cys-71-Cys-90.

Belongs to the neurotoxin 03 (Tx2) family. 03 subfamily. As to expression, expressed by the venom gland.

It is found in the secreted. Ion channel inhibitor. The chain is U15-barytoxin-Tl1b from Trittame loki (Brush-footed trapdoor spider).